A 715-amino-acid polypeptide reads, in one-letter code: Tensin-4 (715 aa).

The N-terminal stretch at 1–18 (MSQVMSSPLLAGGHAVSL) is a signal peptide. A Phosphoserine modification is found at S82. 4 disordered regions span residues 159–183 (RCHD…RSGG), 195–251 (RSSS…SPLV), 291–364 (SLLH…CPPS), and 376–435 (LING…ARDM). Over residues 197–206 (SSESLIFSGN) the composition is skewed to polar residues. S248 bears the Phosphoserine mark. A compositionally biased stretch (low complexity) spans 291-325 (SLLHSSNSSHQSSSRSLESPANSSSSLHSLGSVSL). The 108-residue stretch at 449 to 556 (WFKPNITREQ…ALPCKLTIPQ (108 aa)) folds into the SH2 domain. The region spanning 582–705 (CHTLYLSSVS…QPASQVIGLV (124 aa)) is the PTB domain.

It belongs to the PTEN phosphatase protein family. Interacts (via SH2 domain) with Rho GTPase-activating protein DLC1 (via C-terminus); the interaction is independent of DLC1 tyrosine phosphorylation. Interacts with integrin ITGB1; the interaction displaces tensin TNS3 from the ITGB1 cytoplasmic tail and promotes ITGB1 stability. Interacts (via SH2 domain) with E3 ubiquitin-protein ligase CBL (phosphorylated on 'Tyr-774'); the interaction is enhanced in the presence of EGF and reduces interaction of CBL with EGFR. Interacts (via SH2 domain) with receptor tyrosine kinase MET (when phosphorylated); the interaction increases MET protein stability. In terms of processing, proteolytically cleaved by caspase-3 during apoptosis. In terms of tissue distribution, expressed at low levels in colon (at protein level). Expressed in prostate and placenta.

It localises to the cell junction. The protein localises to the focal adhesion. The protein resides in the cytoplasm. Its subcellular location is the cytoskeleton. Functionally, promotes EGF-induced cell migration by displacing tensin TNS3 from the cytoplasmic tail of integrin ITGB1 which results in dissociation of TNS3 from focal adhesions, disassembly of actin stress fibers and initiation of cell migration. Suppresses ligand-induced degradation of EGFR by reducing EGFR ubiquitination in the presence of EGF. Increases MET protein stability by inhibiting MET endocytosis and subsequent lysosomal degradation which leads to increased cell survival, proliferation and migration. This is Tensin-4 (TNS4) from Homo sapiens (Human).